A 380-amino-acid polypeptide reads, in one-letter code: Probable dual-specificity RNA methyltransferase RlmN (380 aa).

E123 functions as the Proton acceptor in the catalytic mechanism. Positions 129 to 362 constitute a Radical SAM core domain; the sequence is HEYGNSVCVT…VTIRREQGSD (234 aa). A disulfide bond links C136 and C367. [4Fe-4S] cluster is bound by residues C143, C147, and C150. Residues 193–194, S225, 248–250, and N324 contribute to the S-adenosyl-L-methionine site; these read GE and SLH. Catalysis depends on C367, which acts as the S-methylcysteine intermediate.

This sequence belongs to the radical SAM superfamily. RlmN family. [4Fe-4S] cluster serves as cofactor.

The protein localises to the cytoplasm. It carries out the reaction adenosine(2503) in 23S rRNA + 2 reduced [2Fe-2S]-[ferredoxin] + 2 S-adenosyl-L-methionine = 2-methyladenosine(2503) in 23S rRNA + 5'-deoxyadenosine + L-methionine + 2 oxidized [2Fe-2S]-[ferredoxin] + S-adenosyl-L-homocysteine. The enzyme catalyses adenosine(37) in tRNA + 2 reduced [2Fe-2S]-[ferredoxin] + 2 S-adenosyl-L-methionine = 2-methyladenosine(37) in tRNA + 5'-deoxyadenosine + L-methionine + 2 oxidized [2Fe-2S]-[ferredoxin] + S-adenosyl-L-homocysteine. Specifically methylates position 2 of adenine 2503 in 23S rRNA and position 2 of adenine 37 in tRNAs. The chain is Probable dual-specificity RNA methyltransferase RlmN from Lysinibacillus sphaericus (strain C3-41).